The chain runs to 153 residues: Xanthine-guanine phosphoribosyltransferase (153 aa).

Residues 37–38 (RG) and 89–97 (DDLVDTGNT) each bind 5-phospho-alpha-D-ribose 1-diphosphate. Aspartate 90 provides a ligand contact to Mg(2+). Residues aspartate 93 and isoleucine 136 each coordinate guanine. Residues aspartate 93 and isoleucine 136 each contribute to the xanthine site. Residues 93–97 (DTGNT) and 135–136 (WI) each bind GMP.

This sequence belongs to the purine/pyrimidine phosphoribosyltransferase family. XGPT subfamily. As to quaternary structure, homotetramer. Requires Mg(2+) as cofactor.

The protein localises to the cell inner membrane. It carries out the reaction GMP + diphosphate = guanine + 5-phospho-alpha-D-ribose 1-diphosphate. The catalysed reaction is XMP + diphosphate = xanthine + 5-phospho-alpha-D-ribose 1-diphosphate. It catalyses the reaction IMP + diphosphate = hypoxanthine + 5-phospho-alpha-D-ribose 1-diphosphate. It participates in purine metabolism; GMP biosynthesis via salvage pathway; GMP from guanine: step 1/1. Its pathway is purine metabolism; XMP biosynthesis via salvage pathway; XMP from xanthine: step 1/1. Its function is as follows. Purine salvage pathway enzyme that catalyzes the transfer of the ribosyl-5-phosphate group from 5-phospho-alpha-D-ribose 1-diphosphate (PRPP) to the N9 position of the 6-oxopurines guanine and xanthine to form the corresponding ribonucleotides GMP (guanosine 5'-monophosphate) and XMP (xanthosine 5'-monophosphate), with the release of PPi. To a lesser extent, also acts on hypoxanthine. The sequence is that of Xanthine-guanine phosphoribosyltransferase from Pasteurella multocida (strain Pm70).